A 54-amino-acid polypeptide reads, in one-letter code: ATP synthase protein 8 (54 aa).

The chain crosses the membrane as a helical span at residues 9 to 29 (WIINFFIVWTADFTLLIVLSI).

This sequence belongs to the ATPase protein 8 family. In terms of assembly, F-type ATPases have 2 components, CF(1) - the catalytic core - and CF(0) - the membrane proton channel.

The protein resides in the mitochondrion membrane. Mitochondrial membrane ATP synthase (F(1)F(0) ATP synthase or Complex V) produces ATP from ADP in the presence of a proton gradient across the membrane which is generated by electron transport complexes of the respiratory chain. F-type ATPases consist of two structural domains, F(1) - containing the extramembraneous catalytic core and F(0) - containing the membrane proton channel, linked together by a central stalk and a peripheral stalk. During catalysis, ATP synthesis in the catalytic domain of F(1) is coupled via a rotary mechanism of the central stalk subunits to proton translocation. Part of the complex F(0) domain. Minor subunit located with subunit a in the membrane. The protein is ATP synthase protein 8 (MT-ATP8) of Arbacia lixula (Black urchin).